The sequence spans 435 residues: Secreted RxLR effector protein 35 (435 aa).

An N-terminal signal peptide occupies residues 1-22 (MRGAYYIIIALCVVASSQVAAG). Residues 48 to 65 (RFLRGSRVVHDDLANEER) carry the RxLR-dEER motif. Residues 336 to 357 (RPKRTTDGNTGTISLPTKPTKT) are disordered. Positions 342 to 354 (DGNTGTISLPTKP) are enriched in polar residues.

The protein belongs to the RxLR effector family.

The protein localises to the secreted. It is found in the host nucleus. Functionally, secreted effector that acts as an elicitor that induces cell death in host plant cells. The chain is Secreted RxLR effector protein 35 from Plasmopara viticola (Downy mildew of grapevine).